We begin with the raw amino-acid sequence, 579 residues long: Peroxisomal membrane protein PEX28 (579 aa).

Residues 1–243 (MSETSSSRRS…TWRNPTGTVT (243 aa)) are Cytoplasmic-facing. The tract at residues 40–70 (KSPTVAEDLSGSSSSGNSEMSHPSLTASSAT) is disordered. Residues 49 to 63 (SGSSSSGNSEMSHPS) are compositionally biased toward low complexity. A helical membrane pass occupies residues 244–264 (SLILFTLICFNPMYLVILPIF). At 265–392 (RFVYGIVVPG…FQNEECSTKR (128 aa)) the chain is on the peroxisomal side. Asn361 carries N-linked (GlcNAc...) asparagine glycosylation. Residues 393-413 (FFTGFLLIVFLKILSPFVNWS) form a helical membrane-spanning segment. The Cytoplasmic segment spans residues 414–579 (YVCSIFAWCL…RVIKNATPVA (166 aa)).

Belongs to the PEX28-32 family. Peroxin-28 subfamily.

The protein localises to the peroxisome membrane. In terms of biological role, involved in the regulation of peroxisome number, size and distribution. The protein is Peroxisomal membrane protein PEX28 (PEX28) of Saccharomyces cerevisiae (strain ATCC 204508 / S288c) (Baker's yeast).